We begin with the raw amino-acid sequence, 245 residues long: Complement C1q subcomponent subunit A (245 aa).

A signal peptide spans 1–22 (MEGPRGWLVLCVLAISLASMVT). The segment covering 27–38 (RAPDGKKGEAGR) has biased composition (basic and acidic residues). Residues 27-114 (RAPDGKKGEA…SPGNIKDQPR (88 aa)) form a disordered region. The Collagen-like domain maps to 31 to 109 (GKKGEAGRPG…KGTKGSPGNI (79 aa)). 5-hydroxylysine is present on Lys33. O-linked (Gal...) hydroxylysine glycosylation is present at Lys33. 4-hydroxyproline occurs at positions 39 and 45. Lys48 carries the 5-hydroxylysine modification. O-linked (Gal...) hydroxylysine glycosylation is present at Lys48. 4-hydroxyproline is present on residues Pro54 and Pro57. A 5-hydroxylysine modification is found at Lys67. Lys67 is a glycosylation site (O-linked (Gal...) hydroxylysine). Pro73, Pro79, and Pro85 each carry 4-hydroxyproline. Residue Lys100 is modified to 5-hydroxylysine. The O-linked (Gal...) hydroxylysine glycan is linked to Lys100. Residues 110-245 (KDQPRPAFSA…FSGFLIFPSA (136 aa)) enclose the C1q domain. N-linked (GlcNAc...) asparagine glycosylation is present at Asn146. An intrachain disulfide couples Cys172 to Cys190. A Ca(2+)-binding site is contributed by Gln199.

Core component of the complement C1 complex, a calcium-dependent complex composed of 1 molecule of the C1Q subcomplex, 2 molecules of C1R and 2 molecules of C1S. The C1Q subcomplex is composed 18 subunits: 3 chains of C1QA, C1QB, and C1QC trimerize to form 6 collagen-like triple helices connected to six globular ligand-recognition modules (C1q domain). Interacts with CR1 (via Sushi 24 and Sushi 25 domains). Interacts (via C-terminus) with CD33; this interaction activates CD33 inhibitory motifs. As to quaternary structure, (Microbial infection) Interacts with Staphylococcus aureus protein Cna; this interaction results in the inhibition of the classical complement pathway. In terms of processing, O-linked glycans are assumed to be the Glc-Gal disaccharides typically found as secondary modifications of hydroxylated lysines in collagen-like domains.

The protein resides in the secreted. The protein localises to the cell surface. The C1Q subcomplex is inhibited by sulfated molecules, such as triterpenoid sulfates, heparan sulfate, or chondroitin sulfates. Core component of the complement C1 complex, a multiprotein complex that initiates the classical pathway of the complement system, a cascade of proteins that leads to phagocytosis and breakdown of pathogens and signaling that strengthens the adaptive immune system. The classical complement pathway is initiated by the C1Q subcomplex of the C1 complex, which specifically binds IgG or IgM immunoglobulins complexed with antigens, forming antigen-antibody complexes on the surface of pathogens: C1QA, together with C1QB and C1QC, specifically recognizes and binds the Fc regions of IgG or IgM via its C1q domain. Immunoglobulin-binding activates the proenzyme C1R, which cleaves C1S, initiating the proteolytic cascade of the complement system. The C1Q subcomplex is activated by a hexamer of IgG complexed with antigens, while it is activated by a pentameric IgM. The C1Q subcomplex also recognizes and binds phosphatidylserine exposed on the surface of cells undergoing programmed cell death, possibly promoting activation of the complement system. The protein is Complement C1q subcomponent subunit A of Homo sapiens (Human).